Consider the following 361-residue polypeptide: Divinyl chlorophyll a/b light-harvesting protein PcbD (361 aa).

Transmembrane regions (helical) follow at residues 27–47 (FIASHVGHTGLICFAAGGSTL), 93–113 (IVHLILSMVYGGGGLLHGILF), 140–160 (FILGHHLIFMGVACAWFVEWA), 201–221 (VMGGHAFLAFAEITGGAFHIV), 248–268 (AVLSWSLAGIGWMAIVAAFWC), and 315–335 (LTNVHYYLGFFFLQGHFWHAL).

The protein belongs to the PsbB/PsbC family. IsiA/Pcb subfamily. In terms of assembly, the antenna complex consists of divinyl chlorophylls (a and b) and divinyl chlorophyll a/b binding proteins and binds more divinyl chlorophyll b than does the antenna complex from high-light-adapted Prochlorococcus. The cofactor is divinyl chlorophyll a. Divinyl chlorophyll b serves as cofactor.

Its subcellular location is the cellular thylakoid membrane. In terms of biological role, the antenna complex functions as a light receptor, it captures and delivers excitation energy to photosystems II and I. The Prochlorales pcb genes are not related to higher plant LHCs. The chain is Divinyl chlorophyll a/b light-harvesting protein PcbD (pcbD) from Prochlorococcus marinus (strain SARG / CCMP1375 / SS120).